The sequence spans 925 residues: Calpain-B (925 aa).

In terms of domain architecture, Calpain catalytic spans 259-558; sequence MFEDPDFPAT…FDRVEICNLS (300 aa). Residues cysteine 314, histidine 470, and asparagine 498 contribute to the active site. Positions 559 to 728 are domain III; the sequence is PDSLTEDQQH…TRNNMEENDD (170 aa). Positions 723–753 are disordered; it reads MEENDDEVGFGETDDRIAPSLPPPTPKEEDD. Positions 729–748 are linker; that stretch reads EVGFGETDDRIAPSLPPPTP. Residues 749–925 form a domain IV region; the sequence is KEEDDPQRIA…DDWLERTIYS (177 aa). EF-hand domains lie at 796 to 831 and 826 to 861; these read FSKD…IAKW and TDIA…AGYH. Residues aspartate 809, aspartate 811, serine 813, arginine 815, glutamate 820, aspartate 839, threonine 843, serine 845, and histidine 850 each coordinate Ca(2+).

It belongs to the peptidase C2 family. In terms of processing, undergoes calcium-dependent autolytic cleavage between Asn-74 and Ala-75 and between Gln-224 and Asn-225 to produce two major products, calpain B catalytic subunit 1 and calpain B catalytic subunit 2. This autolysis is necessary for activation of the protein. As to expression, strongly expressed in follicular and border cells of the oocyte. Ubiquitously expressed in early embryos. Localized to the trachea and their orifices, and to the larynx of late embryos. Restricted to the salivary gland in third instar larvae.

It localises to the cytoplasm. The protein localises to the membrane. With respect to regulation, activated by millimolar concentrations of calcium. Functionally, calcium-regulated non-lysosomal thiol-protease. The sequence is that of Calpain-B from Drosophila melanogaster (Fruit fly).